The sequence spans 327 residues: Glycerol-3-phosphate acyltransferase (327 aa).

Transmembrane regions (helical) follow at residues 3 to 23, 52 to 72, 78 to 98, 112 to 132, and 152 to 172; these read SLLW…LLFA, VGVL…AVAL, TVFH…SCFL, VFLP…LAVI, and MLLL…MVLV. 2 disordered regions span residues 184-212 and 233-327; these read SRGE…EAAA and PSTE…SSGQ. Residues 199–212 are compositionally biased toward low complexity; it reads AQGTDAGAAPEAAA. Residues 237–246 are compositionally biased toward polar residues; sequence AAPSQETSDA. Over residues 259 to 271 the composition is skewed to basic and acidic residues; the sequence is EGDKRENEEHDNA.

The protein belongs to the PlsY family. As to quaternary structure, probably interacts with PlsX.

The protein resides in the cell inner membrane. It catalyses the reaction an acyl phosphate + sn-glycerol 3-phosphate = a 1-acyl-sn-glycero-3-phosphate + phosphate. It participates in lipid metabolism; phospholipid metabolism. In terms of biological role, catalyzes the transfer of an acyl group from acyl-phosphate (acyl-PO(4)) to glycerol-3-phosphate (G3P) to form lysophosphatidic acid (LPA). This enzyme utilizes acyl-phosphate as fatty acyl donor, but not acyl-CoA or acyl-ACP. This Nitratidesulfovibrio vulgaris (strain ATCC 29579 / DSM 644 / CCUG 34227 / NCIMB 8303 / VKM B-1760 / Hildenborough) (Desulfovibrio vulgaris) protein is Glycerol-3-phosphate acyltransferase.